We begin with the raw amino-acid sequence, 281 residues long: Foldase protein PrsA (281 aa).

The N-terminal stretch at methionine 1 to alanine 18 is a signal peptide. The N-palmitoyl cysteine moiety is linked to residue cysteine 19. The S-diacylglycerol cysteine moiety is linked to residue cysteine 19. Residues lysine 133–aspartate 223 enclose the PpiC domain.

The protein belongs to the PrsA family.

The protein resides in the cell membrane. It carries out the reaction [protein]-peptidylproline (omega=180) = [protein]-peptidylproline (omega=0). Its function is as follows. Plays a major role in protein secretion by helping the post-translocational extracellular folding of several secreted proteins. The chain is Foldase protein PrsA from Geobacillus kaustophilus (strain HTA426).